A 146-amino-acid polypeptide reads, in one-letter code: Decoration protein (146 aa).

As to quaternary structure, homotrimer. Interacts with the major capsid protein.

It localises to the virion. In terms of biological role, cooperatively binds the expanded capsid, thereby stabilizing the mature capsid shell and allowing the large viral DNA to be packaged. Trimers of capsid decoration proteins molecules are located at local and icosahedral threefold axes and stabilize the expanded capsid, which shows increased spacing between capsomers. The polypeptide is Decoration protein (Thermus thermophilus (Thermus thermophilus phage P23-45)).